A 420-amino-acid chain; its full sequence is Putative competence-damage inducible protein (420 aa).

The protein belongs to the CinA family.

The sequence is that of Putative competence-damage inducible protein from Lactiplantibacillus plantarum (strain ATCC BAA-793 / NCIMB 8826 / WCFS1) (Lactobacillus plantarum).